The sequence spans 61 residues: MVVSHKCSFCGGDIPPATGMMHVRNDGTILWFCSNKCRKYMLKYHKDAKKLKWTTSYSRVR.

Zn(2+) is bound by residues Cys-7, Cys-10, Cys-33, and Cys-37. The segment at Cys-7 to Cys-37 adopts a C4-type zinc-finger fold.

It belongs to the eukaryotic ribosomal protein eL24 family. In terms of assembly, part of the 50S ribosomal subunit. Forms a cluster with proteins L3 and L14. Zn(2+) is required as a cofactor.

Functionally, binds to the 23S rRNA. The protein is Large ribosomal subunit protein eL24 of Metallosphaera sedula (strain ATCC 51363 / DSM 5348 / JCM 9185 / NBRC 15509 / TH2).